Consider the following 468-residue polypeptide: Tissue alpha-L-fucosidase (468 aa).

The first 22 residues, 1–22 (MRSWVVGARLLLLLQLVLVLGA), serve as a signal peptide directing secretion. T173 carries the post-translational modification Phosphothreonine. N-linked (GlcNAc...) asparagine glycans are attached at residues N244, N271, and N320.

It belongs to the glycosyl hydrolase 29 family. In terms of assembly, homotetramer.

Its subcellular location is the lysosome. The enzyme catalyses an alpha-L-fucoside + H2O = L-fucose + an alcohol. It carries out the reaction a neolactoside IV(2)-alpha-Fuc-nLc4Cer(d18:1(4E)) + H2O = a neolactoside nLc4Cer(d18:1(4E)) + L-fucose. The catalysed reaction is a neolactoside IV(2)-alpha-Fuc-nLc4Cer(d18:0) + H2O = a neolactoside nLc4Cer(d18:0) + L-fucose. Functionally, alpha-L-fucosidase is responsible for hydrolyzing the alpha-1,6-linked fucose joined to the reducing-end N-acetylglucosamine of the carbohydrate moieties of glycoproteins. The chain is Tissue alpha-L-fucosidase (FUCA1) from Bos taurus (Bovine).